A 511-amino-acid polypeptide reads, in one-letter code: GATOR complex protein NPRL3 (511 aa).

Positions 37 to 58 are disordered; it reads KPATKAPSKDPQPSSSNPGQCV.

It belongs to the NPR3 family. As to quaternary structure, probably part of the GATOR complex.

It is found in the lysosome membrane. In terms of biological role, as a component of the GATOR complex may function in the amino acid-sensing branch of the TORC1 signaling pathway. This is GATOR complex protein NPRL3 (nprl-3) from Caenorhabditis elegans.